Here is a 524-residue protein sequence, read N- to C-terminus: Bifunctional purine biosynthesis protein PurH (524 aa).

The MGS-like domain maps to 1–145 (MIKQALLSVS…KNHRDVTVIV (145 aa)).

The protein belongs to the PurH family.

It carries out the reaction (6R)-10-formyltetrahydrofolate + 5-amino-1-(5-phospho-beta-D-ribosyl)imidazole-4-carboxamide = 5-formamido-1-(5-phospho-D-ribosyl)imidazole-4-carboxamide + (6S)-5,6,7,8-tetrahydrofolate. The enzyme catalyses IMP + H2O = 5-formamido-1-(5-phospho-D-ribosyl)imidazole-4-carboxamide. It participates in purine metabolism; IMP biosynthesis via de novo pathway; 5-formamido-1-(5-phospho-D-ribosyl)imidazole-4-carboxamide from 5-amino-1-(5-phospho-D-ribosyl)imidazole-4-carboxamide (10-formyl THF route): step 1/1. It functions in the pathway purine metabolism; IMP biosynthesis via de novo pathway; IMP from 5-formamido-1-(5-phospho-D-ribosyl)imidazole-4-carboxamide: step 1/1. In Cupriavidus metallidurans (strain ATCC 43123 / DSM 2839 / NBRC 102507 / CH34) (Ralstonia metallidurans), this protein is Bifunctional purine biosynthesis protein PurH.